A 576-amino-acid polypeptide reads, in one-letter code: Putative export ATP-binding/permease protein RF_0214 (576 aa).

Residues 20-303 (LIIVMISLLS…IFELLSEIHL (284 aa)) form the ABC transmembrane type-1 domain. 6 helical membrane-spanning segments follow: residues 21-41 (IIVM…GSVF), 61-81 (ILYI…RSYF), 135-155 (FLSF…LMFF), 158-178 (FKLA…LIKF), 242-262 (ALFF…VVWI), and 277-297 (IISF…IFEL). Residues 336–572 (IEFKNVDFTY…SEIYRNICRE (237 aa)) form the ABC transporter domain. An ATP-binding site is contributed by 371-378 (GRSGGGKS).

Belongs to the ABC transporter superfamily. As to quaternary structure, homodimer.

The protein resides in the cell inner membrane. Functionally, part of an ABC transporter complex. Transmembrane domains (TMD) form a pore in the inner membrane and the ATP-binding domain (NBD) is responsible for energy generation. The sequence is that of Putative export ATP-binding/permease protein RF_0214 from Rickettsia felis (strain ATCC VR-1525 / URRWXCal2) (Rickettsia azadi).